We begin with the raw amino-acid sequence, 970 residues long: Disks large 1 tumor suppressor protein (970 aa).

Positions 4–64 (KKQEAHRALE…FYELTLLDDS (61 aa)) constitute an L27 domain. The disordered stretch occupies residues 161–209 (TENAKEPTVEQQQKQQQAQQRSSRSPQQQNPQQQQGSKSRSGSQTVNGD). The span at 171-204 (QQQKQQQAQQRSSRSPQQQNPQQQQGSKSRSGSQ) shows a compositional bias: low complexity. PDZ domains follow at residues 216-303 (DIQL…KRKR) and 330-421 (EIDL…GKTQ). The segment at 424 to 477 (TTSASGGGGGGLSSGQQLSQSQSQLATSQSQSQVHQQQHATPMVNSQSTEPGSR) is disordered. The span at 437-462 (SGQQLSQSQSQLATSQSQSQVHQQQH) shows a compositional bias: low complexity. Residues 466–477 (MVNSQSTEPGSR) are compositionally biased toward polar residues. Residue Ser496 is modified to Phosphoserine. The PDZ 3 domain occupies 506–587 (TITIQKGPQG…VVTLLAQYRP (82 aa)). Positions 620-690 (KRSLYVRALF…PSKRRWERKM (71 aa)) constitute an SH3 domain. Thr714 is subject to Phosphothreonine. The Guanylate kinase-like domain occupies 780–955 (TRPVIILGPL…IYSKVKSMIW (176 aa)).

Belongs to the MAGUK family. In terms of tissue distribution, during the cellular blastoderm stage, isoform B, isoform F, isoform H, isoform I and isoform L expression is localized to the cell borders. From stage 11 onwards, expression is found predominantly in the developing nervous system: axon bundles in the ventral cord and the brain. Stage 14 and 15 embryos exhibit expression in the developing body wall muscle. Expression in neuropil regions of the CNS and at NMJs persists through to larval development. Other isoforms show expression in embryonic epithelial cells. In larvae, expression is seen as a belt around salivary glands, imaginal disks and proventriculus. Expressed in adult reproductive tissues. In epithelia, coexpressed with scrib throughout development.

It is found in the cytoplasm. The protein localises to the cell membrane. The protein resides in the basolateral cell membrane. Its subcellular location is the cytoskeleton. It localises to the cell junction. It is found in the septate junction. Functionally, during embryonic development, some isoforms are essential for proper neuronal differentiation and organization. Required for cell polarity; maintenance of apicobasal polarity. Plays a critical role at septate junctions in cellular growth control during larval development. The presence of a guanylate kinase domain suggests involvement in cellular adhesion as well as signal transduction to control cellular proliferation. The protein is Disks large 1 tumor suppressor protein (dlg1) of Drosophila melanogaster (Fruit fly).